Consider the following 378-residue polypeptide: Small ribosomal subunit protein bS1 (378 aa).

5 S1 motif domains span residues 1–66 (ETVT…VSRR), 87–155 (GMEV…LGLK), 172–242 (GTKL…LGLK), 259–329 (GDRV…LGVK), and 346–378 (GAIVTGKVTAVDAKGATVELTLGVEGYLRASEA).

The protein belongs to the bacterial ribosomal protein bS1 family.

Binds mRNA; thus facilitating recognition of the initiation point. It is needed to translate mRNA with a short Shine-Dalgarno (SD) purine-rich sequence. This is Small ribosomal subunit protein bS1 (rpsA) from Providencia sp.